The sequence spans 507 residues: ATP synthase subunit alpha (507 aa).

170–177 (GDRQTGKT) is an ATP binding site.

This sequence belongs to the ATPase alpha/beta chains family. In terms of assembly, F-type ATPases have 2 components, CF(1) - the catalytic core - and CF(0) - the membrane proton channel. CF(1) has five subunits: alpha(3), beta(3), gamma(1), delta(1), epsilon(1). CF(0) has three main subunits: a(1), b(2) and c(9-12). The alpha and beta chains form an alternating ring which encloses part of the gamma chain. CF(1) is attached to CF(0) by a central stalk formed by the gamma and epsilon chains, while a peripheral stalk is formed by the delta and b chains.

It is found in the cell inner membrane. It catalyses the reaction ATP + H2O + 4 H(+)(in) = ADP + phosphate + 5 H(+)(out). Produces ATP from ADP in the presence of a proton gradient across the membrane. The alpha chain is a regulatory subunit. In Fervidobacterium nodosum (strain ATCC 35602 / DSM 5306 / Rt17-B1), this protein is ATP synthase subunit alpha.